Reading from the N-terminus, the 116-residue chain is Ferredoxin-thioredoxin reductase, catalytic chain (116 aa).

Cys57 provides a ligand contact to [4Fe-4S] cluster. Residue Cys59 is the Nucleophile of the active site. The cysteines at positions 59 and 89 are disulfide-linked. The [4Fe-4S] cluster site is built by Cys76, Cys78, and Cys87.

This sequence belongs to the ferredoxin thioredoxin reductase beta subunit family. In terms of assembly, heterodimer of subunit A (variable subunit) and subunit B (catalytic subunit). Heterodimeric FTR forms a complex with ferredoxin and thioredoxin. [4Fe-4S] cluster is required as a cofactor.

The protein resides in the plastid. It localises to the chloroplast. The catalysed reaction is [thioredoxin]-disulfide + 2 reduced [2Fe-2S]-[ferredoxin] + 2 H(+) = [thioredoxin]-dithiol + 2 oxidized [2Fe-2S]-[ferredoxin]. Its function is as follows. Catalytic subunit of the ferredoxin-thioredoxin reductase (FTR), which catalyzes the two-electron reduction of thioredoxins by the electrons provided by reduced ferredoxin. This is Ferredoxin-thioredoxin reductase, catalytic chain (ftrB) from Pyropia yezoensis (Susabi-nori).